The primary structure comprises 428 residues: Glutamate-1-semialdehyde 2,1-aminomutase 1 (428 aa).

Lysine 267 carries the N6-(pyridoxal phosphate)lysine modification.

The protein belongs to the class-III pyridoxal-phosphate-dependent aminotransferase family. HemL subfamily. As to quaternary structure, homodimer. Pyridoxal 5'-phosphate is required as a cofactor.

The protein localises to the cytoplasm. The enzyme catalyses (S)-4-amino-5-oxopentanoate = 5-aminolevulinate. Its pathway is porphyrin-containing compound metabolism; protoporphyrin-IX biosynthesis; 5-aminolevulinate from L-glutamyl-tRNA(Glu): step 2/2. In Staphylococcus aureus (strain bovine RF122 / ET3-1), this protein is Glutamate-1-semialdehyde 2,1-aminomutase 1.